The sequence spans 432 residues: Neuronal pentraxin-1 (432 aa).

A signal peptide spans 1 to 22 (MLAGRAARTCALLALCLLGSRA). The tract at residues 90–128 (ESQSTLDAGPGEARSGGGRKQPGSGKNTMGDLSRTPASE) is disordered. Residues Asn154 and Asn193 are each glycosylated (N-linked (GlcNAc...) asparagine). The region spanning 226–428 (DKFQLTFPLR…GATKWTFEAC (203 aa)) is the Pentraxin (PTX) domain. Residues Cys256 and Cys316 are joined by a disulfide bond. Residues Asn280, Glu358, Gln359, Asp360, and Gln370 each coordinate Ca(2+).

As to quaternary structure, homooligomer or heterooligomer (probably pentamer) with neuronal pentraxin receptor (NPTXR). The cofactor is Ca(2+). Glycosylated. In terms of tissue distribution, cerebellum, hippocampus and cerebral cortex.

Its subcellular location is the secreted. The protein localises to the cytoplasmic vesicle. It is found in the secretory vesicle. The protein resides in the endoplasmic reticulum. Functionally, may be involved in mediating uptake of synaptic material during synapse remodeling or in mediating the synaptic clustering of AMPA glutamate receptors at a subset of excitatory synapses. The protein is Neuronal pentraxin-1 (Nptx1) of Rattus norvegicus (Rat).